Consider the following 92-residue polypeptide: C-C motif chemokine 4 (92 aa).

A signal peptide spans 1-23; it reads MKLCVTVLSLLVLVAAFCSPALS. Cystine bridges form between C34-C58 and C35-C74.

The protein belongs to the intercrine beta (chemokine CC) family. Homodimer. Interacts with CCR5.

The protein resides in the secreted. Monokine with inflammatory and chemokinetic properties. This chain is C-C motif chemokine 4 (CCL4), found in Canis lupus familiaris (Dog).